The following is a 232-amino-acid chain: Octanoyltransferase (232 aa).

Residues 33 to 216 enclose the BPL/LPL catalytic domain; the sequence is GRAQDTVILL…HLVRALSNGS (184 aa). Substrate-binding positions include 71-78, 146-148, and 159-161; these read RGGRITWH, AIG, and GFA. Cys-177 (acyl-thioester intermediate) is an active-site residue.

The protein belongs to the LipB family.

The protein localises to the cytoplasm. It carries out the reaction octanoyl-[ACP] + L-lysyl-[protein] = N(6)-octanoyl-L-lysyl-[protein] + holo-[ACP] + H(+). The protein operates within protein modification; protein lipoylation via endogenous pathway; protein N(6)-(lipoyl)lysine from octanoyl-[acyl-carrier-protein]: step 1/2. Its function is as follows. Catalyzes the transfer of endogenously produced octanoic acid from octanoyl-acyl-carrier-protein onto the lipoyl domains of lipoate-dependent enzymes. Lipoyl-ACP can also act as a substrate although octanoyl-ACP is likely to be the physiological substrate. This chain is Octanoyltransferase, found in Clavibacter sepedonicus (Clavibacter michiganensis subsp. sepedonicus).